We begin with the raw amino-acid sequence, 510 residues long: MEYVIEMLNIRKAFPGIVANDNINLQVKKGEIHALLGENGAGKSTLMNVLFGLYQPERGEIRVRGEKVHINSPNKANDLGIGMVHQHFMLVDTFTVAENIILGKEPKKFGRIDRKRAGQEVQDISDRYGLQIHPEAKAADISVGMQQRAEILKTLYRGADILIFDEPTAVLTPHEIKELMQIMKNLVKEGKSIILITHKLKEIMEICDRVTVIRKGKGIKTLDVRDTNQDELASLMVGREVSFKTEKRAAQPGAEVLAIDGITVKDTRGIETVRDLSLSVKAGEIVGIAGVDGNGQSELIEAVTGLRKTDSGTITLNGKQIQNLTPRKITESGIGHIPQDRHKHGLVLDFPIGENILLQSYYKKPYSALGVLHKGEMYKKARSLITEYDVRTPDEYTHARALSGGNQQKAIIGREIDRNPDLLIAAQPTRGLDVGAIEFVHKKLIEQRDAGKAVLLLSFELEEIMNLSDRIAVIFEGRIIASVNPQETTEQELGLLMAGSTQKEAGKANG.

ABC transporter domains are found at residues 5 to 240 and 257 to 501; these read IEML…VGRE and LAID…AGST. 37–44 contributes to the ATP binding site; the sequence is GENGAGKS.

It belongs to the ABC transporter superfamily. As to quaternary structure, the complex is composed of two ATP-binding proteins (NupO), two transmembrane proteins (NupP and NupQ) and a solute-binding protein (NupN).

It localises to the cell membrane. Part of an ABC transporter complex involved in the uptake of guanosine. Responsible for energy coupling to the transport system. May be a nucleoside transporter of broad specificity but with various affinities for different substrates. The protein is Guanosine import ATP-binding protein NupO of Bacillus subtilis (strain 168).